The primary structure comprises 251 residues: MAGHSKWANTKHRKAAQDAKRGKIFTKIIRELVTAARLGGGDPATNPRLRAAVDKALSNNMTRDTLNRAIARGAGNDENDNMETIIYEGYGPGGTAVMVECLSDNRNRTVSDVRHAFTKTGGNLGTDGSVSYLFTKKGVISYAPGVDEDAVMEAALEAGAEDVETYDDGAIDVYTTPEAFGEVKDAMDAAGFVAESAEVSMIPSTKAELDIDTAPKLMRLIDMLEDSDDVQEVYHNGDISDEVAKQLEDIL.

The protein belongs to the TACO1 family.

The protein resides in the cytoplasm. This chain is Probable transcriptional regulatory protein PMI1113, found in Proteus mirabilis (strain HI4320).